Reading from the N-terminus, the 102-residue chain is Co-chaperonin GroES (102 aa).

This sequence belongs to the GroES chaperonin family. Heptamer of 7 subunits arranged in a ring. Interacts with the chaperonin GroEL.

It is found in the cytoplasm. In terms of biological role, together with the chaperonin GroEL, plays an essential role in assisting protein folding. The GroEL-GroES system forms a nano-cage that allows encapsulation of the non-native substrate proteins and provides a physical environment optimized to promote and accelerate protein folding. GroES binds to the apical surface of the GroEL ring, thereby capping the opening of the GroEL channel. This is Co-chaperonin GroES from Chlamydia pneumoniae (Chlamydophila pneumoniae).